The following is a 69-amino-acid chain: U2-agatoxin-Ao1e (69 aa).

Positions 1-20 (MRAIISVLLISAMVFSIIEA) are cleaved as a signal peptide. Positions 21–34 (VPLEEGLQLFEAER) are excised as a propeptide. Disulfide bonds link cysteine 37-cysteine 53, cysteine 44-cysteine 58, and cysteine 52-cysteine 68.

This sequence belongs to the neurotoxin 01 (U2-agtx) family. Expressed by the venom gland.

It localises to the secreted. Insect active toxin causing rapid but reversible paralysis in crickets. No activity shown in mammals. Does not show effect on mammalian voltage-gated calcium channels. In Agelena orientalis (Funnel-web spider), this protein is U2-agatoxin-Ao1e.